We begin with the raw amino-acid sequence, 1537 residues long: DNA-directed RNA polymerase subunit beta' (1537 aa).

Zn(2+) is bound by residues cysteine 57, cysteine 59, cysteine 72, and cysteine 75. Positions 746, 748, and 750 each coordinate Mg(2+). Positions 1120, 1201, 1208, and 1211 each coordinate Zn(2+). A disordered region spans residues 1502–1537 (LEKYGQTSVSTDAVTGSQRYDDTRPSSTSINPSYGD). Composition is skewed to polar residues over residues 1506–1519 (GQTSVSTDAVTGSQ) and 1526–1537 (PSSTSINPSYGD).

Belongs to the RNA polymerase beta' chain family. As to quaternary structure, the RNAP catalytic core consists of 2 alpha, 1 beta, 1 beta' and 1 omega subunit. When a sigma factor is associated with the core the holoenzyme is formed, which can initiate transcription. It depends on Mg(2+) as a cofactor. Requires Zn(2+) as cofactor.

The enzyme catalyses RNA(n) + a ribonucleoside 5'-triphosphate = RNA(n+1) + diphosphate. Functionally, DNA-dependent RNA polymerase catalyzes the transcription of DNA into RNA using the four ribonucleoside triphosphates as substrates. The polypeptide is DNA-directed RNA polymerase subunit beta' (Deinococcus geothermalis (strain DSM 11300 / CIP 105573 / AG-3a)).